Consider the following 305-residue polypeptide: Dihydroorotate dehydrogenase B (NAD(+)), catalytic subunit (305 aa).

Residues Ser23 and 47–48 (KG) each bind FMN. Residues Lys47 and 71-75 (NAIGL) contribute to the substrate site. FMN contacts are provided by Asn101 and Asn129. A substrate-binding site is contributed by Asn129. Cys132 functions as the Nucleophile in the catalytic mechanism. Positions 167 and 193 each coordinate FMN. 194–195 (NT) is a binding site for substrate. FMN contacts are provided by residues Gly219, 245–246 (GG), and 267–268 (GT).

The protein belongs to the dihydroorotate dehydrogenase family. Type 1 subfamily. As to quaternary structure, heterotetramer of 2 PyrK and 2 PyrD type B subunits. The cofactor is FMN.

It localises to the cytoplasm. It carries out the reaction (S)-dihydroorotate + NAD(+) = orotate + NADH + H(+). Its pathway is pyrimidine metabolism; UMP biosynthesis via de novo pathway; orotate from (S)-dihydroorotate (NAD(+) route): step 1/1. Its function is as follows. Catalyzes the conversion of dihydroorotate to orotate with NAD(+) as electron acceptor. This Geobacter metallireducens (strain ATCC 53774 / DSM 7210 / GS-15) protein is Dihydroorotate dehydrogenase B (NAD(+)), catalytic subunit (pyrD).